Here is a 293-residue protein sequence, read N- to C-terminus: Neugrin (293 aa).

The signal sequence occupies residues 1–15; that stretch reads MALSLSLFLGGRVRA. 2 disordered regions span residues 25 to 48 and 162 to 211; these read QGVA…PEER and PLSA…EKNK. A Phosphoserine modification is found at Ser41. Asn270 carries N-linked (GlcNAc...) asparagine glycosylation.

It belongs to the neugrin family. In terms of assembly, forms a regulatory protein-RNA complex, consisting of RCC1L, NGRN, RPUSD3, RPUSD4, TRUB2, FASTKD2 and 16S mt-rRNA. Interacts with 16S mt-rRNA; this interaction is direct.

The protein resides in the nucleus. It is found in the secreted. Its subcellular location is the mitochondrion membrane. In terms of biological role, plays an essential role in mitochondrial ribosome biogenesis. As a component of a functional protein-RNA module, consisting of RCC1L, NGRN, RPUSD3, RPUSD4, TRUB2, FASTKD2 and 16S mitochondrial ribosomal RNA (16S mt-rRNA), controls 16S mt-rRNA abundance and is required for intra-mitochondrial translation of core subunits of the oxidative phosphorylation system. This Rattus norvegicus (Rat) protein is Neugrin (Ngrn).